The primary structure comprises 241 residues: ATP-dependent Clp protease ATP-binding subunit CLPT2, chloroplastic (241 aa).

The transit peptide at 1-75 directs the protein to the chloroplast; sequence MAAHSSCNFA…PRRIHKSAIS (75 aa). In terms of domain architecture, Clp R spans 91-237; the sequence is KPKWSWRAIK…ELESFASESG (147 aa). Repeat regions lie at residues 94–159 and 171–237; these read WSWR…LGKA and LTED…SESG.

Belongs to the ClpA/ClpB family. Monomer and homodimer. The dimers monomerize before association to the P-ring. Component of the chloroplastic Clp protease core complex which consist of at least 16 proteins: CLPP4 (3 copies), CLPP5 (3 copies), CLPR4 (2 copies), ClpP1 (1 copy), CLPP6 (1 copy), CLPR2 (1 copy), CLPT1 (1 copy), CLPT2 (1 copy) and 3 copies of CLPP3 and/or CLPR1 and/or CLPR3. Interacts with AHK2. Interacts with CPN21. No interactions with CLPS1.

The protein resides in the plastid. The protein localises to the chloroplast. In terms of biological role, accessory protein regulating the assembly of the plastidial Clp protease system. CLPT1 first binds to the heptameric P-ring containing the CLP3-6 subunits followed by CLPT2, and only then does the P-ring combine with the R-ring composed of the clpP1 and CLPR1-4 subunits. Once the core complex is fully assembled, it then associates to the CLPC chaperone partner to form the functional protease. CLPT2 and CLPT1 are partially redundant. The chain is ATP-dependent Clp protease ATP-binding subunit CLPT2, chloroplastic from Arabidopsis thaliana (Mouse-ear cress).